We begin with the raw amino-acid sequence, 172 residues long: MNRQEKSVEISELSKILSSSGSVVVAHYKGISVAQIRTSKEGXREAGGGVKVXXNRLVKIAVRDTSVKEVSDLFVGQSLIVYSVDPIVAPKISVNFANDNKQFVVLGGVLENDVLDQCSIKQIASLPNIDGIRAIIISAIQFNATKLLRLLSAPQAQVVRALSAFVDKNKQS.

It belongs to the universal ribosomal protein uL10 family. In terms of assembly, part of the ribosomal stalk of the 50S ribosomal subunit. The N-terminus interacts with L11 and the large rRNA to form the base of the stalk. The C-terminus forms an elongated spine to which L12 dimers bind in a sequential fashion forming a multimeric L10(L12)X complex.

Forms part of the ribosomal stalk, playing a central role in the interaction of the ribosome with GTP-bound translation factors. The polypeptide is Large ribosomal subunit protein uL10 (rplJ) (Liberibacter africanus subsp. capensis).